A 315-amino-acid chain; its full sequence is Methionyl-tRNA formyltransferase (315 aa).

111–114 serves as a coordination point for (6S)-5,6,7,8-tetrahydrofolate; it reads SLLP.

It belongs to the Fmt family.

It carries out the reaction L-methionyl-tRNA(fMet) + (6R)-10-formyltetrahydrofolate = N-formyl-L-methionyl-tRNA(fMet) + (6S)-5,6,7,8-tetrahydrofolate + H(+). Attaches a formyl group to the free amino group of methionyl-tRNA(fMet). The formyl group appears to play a dual role in the initiator identity of N-formylmethionyl-tRNA by promoting its recognition by IF2 and preventing the misappropriation of this tRNA by the elongation apparatus. This Flavobacterium johnsoniae (strain ATCC 17061 / DSM 2064 / JCM 8514 / BCRC 14874 / CCUG 350202 / NBRC 14942 / NCIMB 11054 / UW101) (Cytophaga johnsonae) protein is Methionyl-tRNA formyltransferase.